A 245-amino-acid polypeptide reads, in one-letter code: Adapter protein MecA (245 aa).

This sequence belongs to the MecA family. Homodimer.

In terms of biological role, enables the recognition and targeting of unfolded and aggregated proteins to the ClpC protease or to other proteins involved in proteolysis. This Streptococcus pneumoniae serotype 19F (strain G54) protein is Adapter protein MecA.